A 53-amino-acid polypeptide reads, in one-letter code: Gene 87 protein (53 aa).

The protein is Gene 87 protein (87) of Mycobacterium phage L5 (Mycobacteriophage L5).